The following is a 1396-amino-acid chain: DNA-directed RNA polymerase subunit beta' (1396 aa).

The Zn(2+) site is built by cysteine 73, cysteine 75, cysteine 88, and cysteine 91. Aspartate 467, aspartate 469, and aspartate 471 together coordinate Mg(2+). The Zn(2+) site is built by cysteine 817, cysteine 891, cysteine 898, and cysteine 901.

Belongs to the RNA polymerase beta' chain family. As to quaternary structure, the RNAP catalytic core consists of 2 alpha, 1 beta, 1 beta' and 1 omega subunit. When a sigma factor is associated with the core the holoenzyme is formed, which can initiate transcription. It depends on Mg(2+) as a cofactor. Zn(2+) serves as cofactor.

It catalyses the reaction RNA(n) + a ribonucleoside 5'-triphosphate = RNA(n+1) + diphosphate. DNA-dependent RNA polymerase catalyzes the transcription of DNA into RNA using the four ribonucleoside triphosphates as substrates. The sequence is that of DNA-directed RNA polymerase subunit beta' from Orientia tsutsugamushi (strain Ikeda) (Rickettsia tsutsugamushi).